The sequence spans 905 residues: DNA mismatch repair protein MutS (905 aa).

The disordered stretch occupies residues 1–95; the sequence is MELSLQGSLF…PAWGHHSQLK (95 aa). The segment covering 38 to 50 has biased composition (basic and acidic residues); the sequence is NLSDADLSKDALA. 721-728 lines the ATP pocket; that stretch reads GPNASGKS.

It belongs to the DNA mismatch repair MutS family.

This protein is involved in the repair of mismatches in DNA. It is possible that it carries out the mismatch recognition step. This protein has a weak ATPase activity. The polypeptide is DNA mismatch repair protein MutS (Synechococcus sp. (strain CC9902)).